A 103-amino-acid chain; its full sequence is Signal recognition particle 19 kDa protein (103 aa).

Belongs to the SRP19 family. As to quaternary structure, part of the signal recognition particle protein translocation system, which is composed of SRP and FtsY. Archaeal SRP consists of a 7S RNA molecule of 300 nucleotides and two protein subunits: SRP54 and SRP19.

Its subcellular location is the cytoplasm. Its function is as follows. Involved in targeting and insertion of nascent membrane proteins into the cytoplasmic membrane. Binds directly to 7S RNA and mediates binding of the 54 kDa subunit of the SRP. The sequence is that of Signal recognition particle 19 kDa protein from Hyperthermus butylicus (strain DSM 5456 / JCM 9403 / PLM1-5).